The primary structure comprises 856 residues: Structure-specific endonuclease subunit SLX4 (856 aa).

The span at 1–19 (MDNAAIASQSNTPPSNGRS) shows a compositional bias: polar residues. 9 disordered regions span residues 1-24 (MDNA…ARFV), 39-61 (IEPS…SKSP), 88-121 (VDSP…HKMA), 139-201 (KTRK…TDNE), 296-326 (GIQT…KKPQ), 362-392 (KKMG…GNGP), 621-640 (SKSS…SQGD), 653-688 (RSDS…SNEG), and 715-742 (DSVG…QDCD). The segment covering 51–60 (STLLTSLSKS) has biased composition (low complexity). A compositionally biased stretch (basic residues) spans 139-152 (KTRKKKAATAKRTR). Residues 296 to 309 (GIQTPTESRPATND) are compositionally biased toward polar residues. Positions 673–686 (SVKSQESKSFSLSN) are enriched in polar residues.

This sequence belongs to the SLX4 family. As to quaternary structure, forms a heterodimer with SLX1. Phosphorylated in response to DNA damage.

It localises to the nucleus. Regulatory subunit of the SLX1-SLX4 structure-specific endonuclease that resolves DNA secondary structures generated during DNA repair and recombination. Has endonuclease activity towards branched DNA substrates, introducing single-strand cuts in duplex DNA close to junctions with ss-DNA. The polypeptide is Structure-specific endonuclease subunit SLX4 (Ajellomyces dermatitidis (strain ER-3 / ATCC MYA-2586) (Blastomyces dermatitidis)).